The chain runs to 591 residues: L-fucose isomerase (591 aa).

Residues glutamate 337 and aspartate 361 each act as proton acceptor in the active site. Glutamate 337, aspartate 361, and histidine 528 together coordinate Mn(2+).

Belongs to the L-fucose isomerase family. Homohexamer. Mn(2+) serves as cofactor.

It localises to the cytoplasm. The catalysed reaction is L-fucose = L-fuculose. It functions in the pathway carbohydrate degradation; L-fucose degradation; L-lactaldehyde and glycerone phosphate from L-fucose: step 1/3. Its function is as follows. Converts the aldose L-fucose into the corresponding ketose L-fuculose. The polypeptide is L-fucose isomerase (Salmonella paratyphi B (strain ATCC BAA-1250 / SPB7)).